The sequence spans 156 residues: Small ribosomal subunit protein uS7 (156 aa).

This sequence belongs to the universal ribosomal protein uS7 family. As to quaternary structure, part of the 30S ribosomal subunit. Contacts proteins S9 and S11.

Functionally, one of the primary rRNA binding proteins, it binds directly to 16S rRNA where it nucleates assembly of the head domain of the 30S subunit. Is located at the subunit interface close to the decoding center, probably blocks exit of the E-site tRNA. This Pseudomonas fluorescens (strain SBW25) protein is Small ribosomal subunit protein uS7.